A 526-amino-acid polypeptide reads, in one-letter code: GMP synthase [glutamine-hydrolyzing] (526 aa).

Residues 3-199 (RVAIIDFGSQ…FVRIAGCDNN (197 aa)) form the Glutamine amidotransferase type-1 domain. Cys-83 (nucleophile) is an active-site residue. Residues His-174 and Glu-176 contribute to the active site. The GMPS ATP-PPase domain occupies 200–392 (WTVESFLDEQ…LGISDEILMR (193 aa)). Residue 227 to 233 (SGGVDSS) coordinates ATP.

Homodimer.

It carries out the reaction XMP + L-glutamine + ATP + H2O = GMP + L-glutamate + AMP + diphosphate + 2 H(+). It participates in purine metabolism; GMP biosynthesis; GMP from XMP (L-Gln route): step 1/1. In terms of biological role, catalyzes the synthesis of GMP from XMP. The sequence is that of GMP synthase [glutamine-hydrolyzing] from Ehrlichia chaffeensis (strain ATCC CRL-10679 / Arkansas).